The following is a 761-amino-acid chain: Mitochondrial inner membrane m-AAA protease component YTA10 (761 aa).

The Mitochondrial matrix segment spans residues 1 to 115 (MMMWQRYARG…SLSEYFRSKE (115 aa)). The interval 67–101 (SWTRLNENRPNKEGEGKNNGNKDNNSNKEDGKDKR) is disordered. Composition is skewed to basic and acidic residues over residues 72 to 82 (NENRPNKEGEG) and 91 to 101 (NSNKEDGKDKR). Residues 116–136 (FANTMFLTIGFTIIFTLLTPS) form a helical membrane-spanning segment. Over 137-223 (SNNSGDDSNR…IPIKYIERSS (87 aa)) the chain is Mitochondrial intermembrane. Residues 224–244 (PFTFLFPFLPTIILLGGLYFI) traverse the membrane as a helical segment. Residues 245–761 (TRKINSSPPN…EPPEAPAATN (517 aa)) lie on the Mitochondrial matrix side of the membrane. 8 residues coordinate ATP: Val290, Ala291, Thr332, Gly333, Lys334, Thr335, Leu336, and His472. Residue His558 participates in Zn(2+) binding. Glu559 is an active-site residue. 2 residues coordinate Zn(2+): His562 and Asp634.

It in the N-terminal section; belongs to the AAA ATPase family. The protein in the C-terminal section; belongs to the peptidase M41 family. Component of the 850 kDa m-AAA protease complex, a heterohexamer composed of YTA12/RCA1 and YTA10/AFG3. Associates with the prohibitin complex, composed of PHB1 and PHB2, inhibiting the activity of the m-AAA protease complex. The cofactor is Zn(2+).

It localises to the mitochondrion inner membrane. The enzyme catalyses ATP + H2O = ADP + phosphate + H(+). ATP hydrolysis is coordinated within m-AAA protease ring complexes: ATP-binding to YTA10/AFG3 inhibits ATP hydrolysis by the neighboring subunit YTA12/RCA1, leading to coordinated ATP hydrolysis within the AAA ATPase ring. Catalytic component of the m-AAA protease, a protease that plays a key role in proteostasis of inner mitochondrial membrane proteins. YTA10/AFG3 possesses both ATPase and protease activities: the ATPase activity is required to unfold substrates, threading them into the internal proteolytic cavity for hydrolysis into small peptide fragments. The complex is necessary for the assembly of mitochondrial respiratory chain and ATPase complexes. The m-AAA protease carries out protein quality control in the inner membrane of the mitochondria by mediating degradation of mistranslated or misfolded polypeptides. It also mediates protein maturation of the mitochondrial ribosomal subunit MRPL32/bL32m by catalyzing the cleavage of the presequence of MRPL32/bL32m prior to assembly into the mitochondrial ribosome. Promotes maturation of cytochrome c peroxidase (CCP1) by acting as a membrane protein dislocase via its ATPase activity: pulls the CCP1 transmembrane to the matrix prior to processing by the rhomboid protease PCP1. The membrane protein dislocase activity is also required to dislocate moderately hydrophobic transmembrane segments from the membrane. The sequence is that of Mitochondrial inner membrane m-AAA protease component YTA10 from Saccharomyces cerevisiae (strain ATCC 204508 / S288c) (Baker's yeast).